A 410-amino-acid chain; its full sequence is Neuroserpin (410 aa).

A signal peptide spans Met1–Ala16. Asn157, Asn321, and Asn401 each carry an N-linked (GlcNAc...) asparagine glycan. Ser403 is a glycosylation site (O-linked (Xyl...) (chondroitin sulfate) serine).

The protein belongs to the serpin family. Monomer. Has a tendency to form large polymers already at 41 and 45 degrees Celsius (in vitro). As to expression, detected in brain cortex and hippocampus pyramidal neurons (at protein level). Detected in cerebrospinal fluid (at protein level). Predominantly expressed in the brain.

Its subcellular location is the secreted. It localises to the cytoplasmic vesicle. The protein localises to the secretory vesicle lumen. It is found in the perikaryon. In terms of biological role, serine protease inhibitor that inhibits plasminogen activators and plasmin but not thrombin. May be involved in the formation or reorganization of synaptic connections as well as for synaptic plasticity in the adult nervous system. May protect neurons from cell damage by tissue-type plasminogen activator. This chain is Neuroserpin (SERPINI1), found in Homo sapiens (Human).